Consider the following 393-residue polypeptide: S-adenosylmethionine synthase (393 aa).

His-16 contacts ATP. Asp-18 provides a ligand contact to Mg(2+). Glu-44 provides a ligand contact to K(+). L-methionine is bound by residues Glu-57 and Gln-100. Positions 100 to 110 (QSNDIAQGVDH) are flexible loop. ATP contacts are provided by residues 167-169 (DAK), 238-239 (RF), Asp-247, 253-254 (RK), Ala-270, and Lys-274. Position 247 (Asp-247) interacts with L-methionine. Lys-278 is a binding site for L-methionine.

Belongs to the AdoMet synthase family. Homotetramer; dimer of dimers. Requires Mg(2+) as cofactor. K(+) is required as a cofactor.

The protein resides in the cytoplasm. The catalysed reaction is L-methionine + ATP + H2O = S-adenosyl-L-methionine + phosphate + diphosphate. The protein operates within amino-acid biosynthesis; S-adenosyl-L-methionine biosynthesis; S-adenosyl-L-methionine from L-methionine: step 1/1. Catalyzes the formation of S-adenosylmethionine (AdoMet) from methionine and ATP. The overall synthetic reaction is composed of two sequential steps, AdoMet formation and the subsequent tripolyphosphate hydrolysis which occurs prior to release of AdoMet from the enzyme. The chain is S-adenosylmethionine synthase from Paracidovorax citrulli (strain AAC00-1) (Acidovorax citrulli).